The chain runs to 147 residues: Large ribosomal subunit protein uL15 (147 aa).

Basic and acidic residues predominate over residues 1 to 13 (MKLENLKSKEGSR). Residues 1–54 (MKLENLKSKEGSRHKTKRVGRGFGSGIGKTSTRGSKGQKSRKSGHTRPGFEGGQ) are disordered. A compositionally biased stretch (basic residues) spans 36–45 (KGQKSRKSGH).

Belongs to the universal ribosomal protein uL15 family. As to quaternary structure, part of the 50S ribosomal subunit.

In terms of biological role, binds to the 23S rRNA. The sequence is that of Large ribosomal subunit protein uL15 from Malacoplasma penetrans (strain HF-2) (Mycoplasma penetrans).